Here is a 147-residue protein sequence, read N- to C-terminus: Putative cystatin-9-like protein CST9LP1 (147 aa).

The first 28 residues, 1–28 (MWSLPPSRALSCAPLLLLFSFQFLVTYA), serve as a signal peptide directing secretion. C98 and C108 are disulfide-bonded. N-linked (GlcNAc...) asparagine glycosylation is found at N117 and N139. The cysteines at positions 122 and 142 are disulfide-linked.

Belongs to the cystatin family.

The protein resides in the secreted. The sequence is that of Putative cystatin-9-like protein CST9LP1 (CST9LP1) from Homo sapiens (Human).